A 560-amino-acid chain; its full sequence is MNNNIINLVAAIILSLSIIFGWQYFVVKPEQKKQQQQIAVQKAENLKKQQLKALVEPATGIVVQEESQIQRIKIESESLTGSISLKGLRFDDLILKKYKQDLSKNSPEVRLFSPSNTENAYFAEIGLVSNLSSVKLPNNDTIWNSDSEILSPEKPVHLFWVNEDGVKFLVTITVDENYLFTIEQTIVNYSDKELPVQSYGLINRKYIAVEKAVNILHQGPIGCIDENLKEYSYDDIKDKKSEKFAASKVDWIGITDKYWLSSLIPDKSSNYSSNFNYALKQGTERYQVDFISPVQIIKPGENFSIKSRIFAGAKKVDLLDKYEKQYDIKLFDRAIDFGWFYIITKPVFYAMNFFYGYVGNFGVSILIVTVIIKLLMFTLANKSYRSMKKMKNLQPEIDRIKNLYSDDKARLNQEIMALYKKEKVNPVAGCLPILVQIPVFFSIYKVLYVTIEMRQTPFYGWIKDLSAPDPTTIFNLFGLLPFSPPSFLMIGAWPILMAITMFLQQKMSPEPADPMQAQVMKFMPLIFLFMFSSFPVGLLIYWSWNNILSIIQQYYINKFN.

Transmembrane regions (helical) follow at residues 5-25 (IINL…WQYF), 334-354 (AIDF…MNFF), 357-377 (YVGN…LLMF), 431-451 (LPIL…YVTI), 476-496 (LFGL…WPIL), and 522-542 (FMPL…LIYW).

It belongs to the OXA1/ALB3/YidC family. Type 1 subfamily. As to quaternary structure, interacts with the Sec translocase complex via SecD. Specifically interacts with transmembrane segments of nascent integral membrane proteins during membrane integration.

The protein resides in the cell inner membrane. Functionally, required for the insertion and/or proper folding and/or complex formation of integral membrane proteins into the membrane. Involved in integration of membrane proteins that insert both dependently and independently of the Sec translocase complex, as well as at least some lipoproteins. Aids folding of multispanning membrane proteins. The sequence is that of Membrane protein insertase YidC from Rickettsia massiliae (strain Mtu5).